Consider the following 282-residue polypeptide: 1D-myo-inositol 2-acetamido-2-deoxy-alpha-D-glucopyranoside deacetylase (282 aa).

Residues His6, Asp9, and His141 each contribute to the Zn(2+) site.

The protein belongs to the MshB deacetylase family. The cofactor is Zn(2+).

The enzyme catalyses 1D-myo-inositol 2-acetamido-2-deoxy-alpha-D-glucopyranoside + H2O = 1D-myo-inositol 2-amino-2-deoxy-alpha-D-glucopyranoside + acetate. Its function is as follows. Catalyzes the deacetylation of 1D-myo-inositol 2-acetamido-2-deoxy-alpha-D-glucopyranoside (GlcNAc-Ins) in the mycothiol biosynthesis pathway. The chain is 1D-myo-inositol 2-acetamido-2-deoxy-alpha-D-glucopyranoside deacetylase from Nocardiopsis dassonvillei (strain ATCC 23218 / DSM 43111 / CIP 107115 / JCM 7437 / KCTC 9190 / NBRC 14626 / NCTC 10488 / NRRL B-5397 / IMRU 509) (Actinomadura dassonvillei).